Consider the following 131-residue polypeptide: Small ribosomal subunit protein uS8 (131 aa).

The protein belongs to the universal ribosomal protein uS8 family. Part of the 30S ribosomal subunit. Contacts proteins S5 and S12.

Its function is as follows. One of the primary rRNA binding proteins, it binds directly to 16S rRNA central domain where it helps coordinate assembly of the platform of the 30S subunit. The protein is Small ribosomal subunit protein uS8 of Wolbachia pipientis wMel.